A 204-amino-acid chain; its full sequence is Elongation factor Ts (204 aa).

The involved in Mg(2+) ion dislocation from EF-Tu stretch occupies residues Thr80–Val83.

It belongs to the EF-Ts family.

The protein resides in the cytoplasm. In terms of biological role, associates with the EF-Tu.GDP complex and induces the exchange of GDP to GTP. It remains bound to the aminoacyl-tRNA.EF-Tu.GTP complex up to the GTP hydrolysis stage on the ribosome. This is Elongation factor Ts from Caldicellulosiruptor bescii (strain ATCC BAA-1888 / DSM 6725 / KCTC 15123 / Z-1320) (Anaerocellum thermophilum).